Reading from the N-terminus, the 663-residue chain is Translation factor GUF1 homolog, mitochondrial (663 aa).

The N-terminal 33 residues, 1–33 (MAGAAALRRSARRVVLPGAYALSRALQHPERLL), are a transit peptide targeting the mitochondrion. The tr-type G domain maps to 55 to 247 (ERVRNFSIIA…AVIERIPSPP (193 aa)). GTP is bound by residues 64 to 71 (AHVDHGKS), 140 to 144 (DTPGH), and 194 to 197 (NKID).

Belongs to the TRAFAC class translation factor GTPase superfamily. Classic translation factor GTPase family. LepA subfamily.

The protein localises to the mitochondrion inner membrane. The enzyme catalyses GTP + H2O = GDP + phosphate + H(+). Functionally, promotes mitochondrial protein synthesis. May act as a fidelity factor of the translation reaction, by catalyzing a one-codon backward translocation of tRNAs on improperly translocated ribosomes. Binds to mitochondrial ribosomes in a GTP-dependent manner. In Oryza sativa subsp. japonica (Rice), this protein is Translation factor GUF1 homolog, mitochondrial.